Reading from the N-terminus, the 164-residue chain is V-type proton ATPase 16 kDa proteolipid subunit (164 aa).

At 1-9 (MSNFAGDET) the chain is on the lumenal side. A helical transmembrane segment spans residues 10–32 (APFFGFLGAAAALVFSCMGAAYG). Residues 33 to 54 (TAKSGVGVASMGVMRPELVMKS) are Cytoplasmic-facing. The chain crosses the membrane as a helical span at residues 55–75 (IVPVVMAGVLGIYGLIIAVII). The Lumenal portion of the chain corresponds to 76–94 (STGINPKTKSYYLFDGYAH). A helical transmembrane segment spans residues 95–116 (LSSGLACGLAGLSAGMAIGIVG). The Cytoplasmic segment spans residues 117-128 (DAGVRANAQQPK). The chain crosses the membrane as a helical span at residues 129 to 154 (LFVGMILILIFAEALALYGLIVGIIL). Residues 155–164 (SSRAGQSRAE) are Lumenal-facing.

It belongs to the V-ATPase proteolipid subunit family. As to quaternary structure, V-ATPase is a heteromultimeric enzyme composed of a peripheral catalytic V1 complex (main components: subunits A, B, C, D, E, and F) attached to an integral membrane V0 proton pore complex (main component: the proteolipid protein; which is present as a hexamer that forms the proton-conducting pore).

It localises to the vacuole membrane. In terms of biological role, proton-conducting pore forming subunit of the membrane integral V0 complex of vacuolar ATPase. V-ATPase is responsible for acidifying a variety of intracellular compartments in eukaryotic cells. The polypeptide is V-type proton ATPase 16 kDa proteolipid subunit (Solanum lycopersicum (Tomato)).